The chain runs to 304 residues: Rhodopsin (304 aa).

Topologically, residues 1–13 (YEYPQYYLVNPAA) are extracellular. Residues 14–38 (YAALGAYMFLLILVGFPINFLTLYV) traverse the membrane as a helical segment. Residues 39–50 (TIEHKKLRTPLN) lie on the Cytoplasmic side of the membrane. The chain crosses the membrane as a helical span at residues 51–73 (YILLNLAVANLFMVFGGFTTTMF). The Extracellular segment spans residues 74–87 (TSIRGYFVLGHLGC). The cysteines at positions 87 and 164 are disulfide-linked. Residues 88–110 (NLEGFFATLSGEIALWSLVVLAI) form a helical membrane-spanning segment. A 'Ionic lock' involved in activated form stabilization motif is present at residues 111 to 113 (ERW). Over 111–129 (ERWVVVCKPISNFRFGENH) the chain is Cytoplasmic. The chain crosses the membrane as a helical span at residues 130 to 150 (AIMGLAFTWTMAMACAAPPLV). The Extracellular segment spans residues 151–179 (GWSRYIPEGMQCSCGIDYYTRAEGFNNES). The N-linked (GlcNAc...) asparagine glycan is linked to asparagine 177. A helical transmembrane segment spans residues 180–201 (FVVYMFTCHFMTPLTIVFFCYG). The Cytoplasmic segment spans residues 202–229 (RLLCAVKEAAAAQQESETTQRAEREVTR). Residues 230-251 (MVVIMVIAFLICWCPYAGVAWF) traverse the membrane as a helical segment. The Extracellular segment spans residues 252–263 (IFTHQGSEFGPV). A helical membrane pass occupies residues 264-285 (FMTIPAFFAKSSSIYNPMIYIC). At lysine 273 the chain carries N6-(retinylidene)lysine. Over 286-304 (LNKQFRHCMITTLCCGKKA) the chain is Cytoplasmic. Residues cysteine 299 and cysteine 300 are each lipidated (S-palmitoyl cysteine).

The protein belongs to the G-protein coupled receptor 1 family. Opsin subfamily. Phosphorylated on some or all of the serine and threonine residues present in the C-terminal region. In terms of processing, contains one covalently linked retinal chromophore.

Its subcellular location is the membrane. It is found in the cell projection. The protein resides in the cilium. It localises to the photoreceptor outer segment. Its function is as follows. Photoreceptor required for image-forming vision at low light intensity. While most salt water fish species use retinal as chromophore, most freshwater fish use 3-dehydroretinal, or a mixture of retinal and 3-dehydroretinal. Light-induced isomerization of 11-cis to all-trans retinal triggers a conformational change that activates signaling via G-proteins. Subsequent receptor phosphorylation mediates displacement of the bound G-protein alpha subunit by arrestin and terminates signaling. The protein is Rhodopsin (rho) of Ictalurus punctatus (Channel catfish).